A 451-amino-acid chain; its full sequence is MTKRKLRNNWIIVTTMITFVTIFLFCLIIIFFLKDTLHNSELDDAERSSSDINNLFHSKPVKDISALDLNASLGNFQEIIIYDEHNNKLFETSNDNTVRVEPGYEHRYFDRVIKKRYKGIDYLIIKEPITTQDFKGYSLLIHSLENYDNIVKSLYIIALAFGVIATIITATISYVFSTQITKPLVSLSNKMIEIRRDGFQNKLQLNTNYEEIDNLANTFNEMMSQIEESFNQQRQFVEDASHELRTPLQIIQGHLNLIQRWGKKDPAVLEESLNISIEEMNRIIKLVEELLELTKGDVNDISSEAQTVHINDEIRSRIHSLKQLHPDYQFDTDLTSKNLEIKMKPHQFEQLFLIFIDNAIKYDVKNKKIKVKTRLKNKQKIIEITDHGIGIPEEDQDFIFDRFYRVDKSRSRSQGGNGLGLSIAQKIIQLNGGSIKIKSEINKGTTFKIIF.

The next 2 helical transmembrane spans lie at 11-31 and 156-176; these read IIVT…IIIF and IIAL…SYVF. In terms of domain architecture, HAMP spans 178–231; that stretch reads TQITKPLVSLSNKMIEIRRDGFQNKLQLNTNYEEIDNLANTFNEMMSQIEESFN. The Histidine kinase domain occupies 239 to 451; the sequence is DASHELRTPL…NKGTTFKIIF (213 aa). The residue at position 242 (histidine 242) is a Phosphohistidine; by autocatalysis.

Post-translationally, autophosphorylated.

It localises to the cell membrane. The enzyme catalyses ATP + protein L-histidine = ADP + protein N-phospho-L-histidine.. Functionally, member of the two-component regulatory system ArlS/ArlR involved in the regulation of adhesion, autolysis, multidrug resistance and virulence. ArlS probably functions as a sensor protein kinase which is autophosphorylated at a histidine residue and transfers its phosphate group to ArlR. The sequence is that of Signal transduction histidine-protein kinase ArlS (arlS) from Staphylococcus aureus (strain MRSA252).